The following is a 1126-amino-acid chain: Replication protein 1a (1126 aa).

Positions S69–I406 are methyltransferase. The Alphavirus-like MT domain occupies V90–L278. The (+)RNA virus helicase ATP-binding domain occupies D806–K963. The ATP-dependent helicase stretch occupies residues T834–T1094. G838–T845 lines the ATP pocket. The region spanning L964–N1125 is the (+)RNA virus helicase C-terminal domain.

The protein belongs to the bromoviridae replication protein 1a family. As to quaternary structure, interacts with RNA-directed RNA polymerase 2a.

The protein resides in the host endoplasmic reticulum membrane. Involved in the virus replication. Contains a helicase domain and a methyltransferase domain. The methyltransferase domain is probably involved in viral RNA capping. Involved in the formation of ER membrane spherular invaginations in which RNA replication complexes form. This Alfalfa mosaic virus (AMV) protein is Replication protein 1a.